Reading from the N-terminus, the 529-residue chain is Bifunctional purine biosynthesis protein PurH (529 aa).

The MGS-like domain occupies 1-148 (MQQRRPVRRA…KNHKDVAIVV (148 aa)).

This sequence belongs to the PurH family.

The catalysed reaction is (6R)-10-formyltetrahydrofolate + 5-amino-1-(5-phospho-beta-D-ribosyl)imidazole-4-carboxamide = 5-formamido-1-(5-phospho-D-ribosyl)imidazole-4-carboxamide + (6S)-5,6,7,8-tetrahydrofolate. It carries out the reaction IMP + H2O = 5-formamido-1-(5-phospho-D-ribosyl)imidazole-4-carboxamide. It functions in the pathway purine metabolism; IMP biosynthesis via de novo pathway; 5-formamido-1-(5-phospho-D-ribosyl)imidazole-4-carboxamide from 5-amino-1-(5-phospho-D-ribosyl)imidazole-4-carboxamide (10-formyl THF route): step 1/1. It participates in purine metabolism; IMP biosynthesis via de novo pathway; IMP from 5-formamido-1-(5-phospho-D-ribosyl)imidazole-4-carboxamide: step 1/1. The polypeptide is Bifunctional purine biosynthesis protein PurH (Salmonella typhi).